The sequence spans 518 residues: Protein nucleotidyltransferase YdiU (518 aa).

ATP contacts are provided by Gly99, Gly101, Arg102, Lys122, Asp134, Gly135, Arg192, and Arg199. The active-site Proton acceptor is Asp270. Asn271 and Asp280 together coordinate Mg(2+). Asp280 is a binding site for ATP.

It belongs to the SELO family. Mg(2+) serves as cofactor. It depends on Mn(2+) as a cofactor.

The catalysed reaction is L-seryl-[protein] + ATP = 3-O-(5'-adenylyl)-L-seryl-[protein] + diphosphate. The enzyme catalyses L-threonyl-[protein] + ATP = 3-O-(5'-adenylyl)-L-threonyl-[protein] + diphosphate. It catalyses the reaction L-tyrosyl-[protein] + ATP = O-(5'-adenylyl)-L-tyrosyl-[protein] + diphosphate. It carries out the reaction L-histidyl-[protein] + UTP = N(tele)-(5'-uridylyl)-L-histidyl-[protein] + diphosphate. The catalysed reaction is L-seryl-[protein] + UTP = O-(5'-uridylyl)-L-seryl-[protein] + diphosphate. The enzyme catalyses L-tyrosyl-[protein] + UTP = O-(5'-uridylyl)-L-tyrosyl-[protein] + diphosphate. Its function is as follows. Nucleotidyltransferase involved in the post-translational modification of proteins. It can catalyze the addition of adenosine monophosphate (AMP) or uridine monophosphate (UMP) to a protein, resulting in modifications known as AMPylation and UMPylation. In Methylobacillus flagellatus (strain ATCC 51484 / DSM 6875 / VKM B-1610 / KT), this protein is Protein nucleotidyltransferase YdiU.